The sequence spans 242 residues: Sugar fermentation stimulation protein homolog (242 aa).

This sequence belongs to the SfsA family.

This Enterococcus mundtii protein is Sugar fermentation stimulation protein homolog.